The following is a 429-amino-acid chain: Enolase (429 aa).

Position 163 (Q163) interacts with (2R)-2-phosphoglycerate. E205 serves as the catalytic Proton donor. Residues D242, E286, and D313 each contribute to the Mg(2+) site. (2R)-2-phosphoglycerate is bound by residues K338, R367, S368, and K389. Residue K338 is the Proton acceptor of the active site.

Belongs to the enolase family. Requires Mg(2+) as cofactor.

The protein resides in the cytoplasm. It is found in the secreted. Its subcellular location is the cell surface. The catalysed reaction is (2R)-2-phosphoglycerate = phosphoenolpyruvate + H2O. It participates in carbohydrate degradation; glycolysis; pyruvate from D-glyceraldehyde 3-phosphate: step 4/5. Catalyzes the reversible conversion of 2-phosphoglycerate (2-PG) into phosphoenolpyruvate (PEP). It is essential for the degradation of carbohydrates via glycolysis. The sequence is that of Enolase from Pelobacter propionicus (strain DSM 2379 / NBRC 103807 / OttBd1).